A 156-amino-acid chain; its full sequence is MPRRRVIGQRKILPDPKFKSELLAKFVNILMVDGKKSTAEKIVYTALDSMAEKSGKDHLAIFEEALENVRPAVEVKSRRVGGSTYQVPVEVRPVRRNALAMRWLVEAARKRGEKSMAQRLAAEMLDASENKGTAVKKREDVHRMAEANKAFAHYRW.

It belongs to the universal ribosomal protein uS7 family. In terms of assembly, part of the 30S ribosomal subunit. Contacts proteins S9 and S11.

Functionally, one of the primary rRNA binding proteins, it binds directly to 16S rRNA where it nucleates assembly of the head domain of the 30S subunit. Is located at the subunit interface close to the decoding center, probably blocks exit of the E-site tRNA. This Vibrio parahaemolyticus serotype O3:K6 (strain RIMD 2210633) protein is Small ribosomal subunit protein uS7.